An 89-amino-acid chain; its full sequence is MIDYIKSPVLKFKLIRLLEKNQYTFDVDPKATKTDVKYWVENFFGVKVIGMNSHRPPRKMKRMGPTIGYPVRYKRMIVTLRAGDSIPLF.

This sequence belongs to the universal ribosomal protein uL23 family. As to quaternary structure, part of the 50S ribosomal subunit.

It localises to the plastid. The protein resides in the chloroplast. In terms of biological role, binds to 23S rRNA. This is Large ribosomal subunit protein uL23c (rpl23) from Staurastrum punctulatum (Green alga).